The primary structure comprises 341 residues: Phospholipid phosphatase homolog 1.2 homolog (341 aa).

3 helical membrane-spanning segments follow: residues 30-50 (LFIF…LLGV), 71-91 (ITAV…VLFV), and 122-142 (LLTY…LNIV). A glycan (N-linked (GlcNAc...) asparagine) is linked at N162. 2 helical membrane passes run 223 to 243 (RIVV…ISFS) and 257 to 277 (VGIF…TDLF). Disordered regions lie at residues 284–308 (SETQ…ERHR) and 322–341 (FEAT…PQSA). Residues 299–308 (RNSEDEERHR) are compositionally biased toward basic and acidic residues.

This sequence belongs to the PA-phosphatase related phosphoesterase family.

It is found in the membrane. The sequence is that of Phospholipid phosphatase homolog 1.2 homolog from Caenorhabditis elegans.